The primary structure comprises 530 residues: UDP-glucuronosyltransferase 2B17 (530 aa).

A signal peptide spans 1-23; the sequence is MPGKWISALLLLQISCCFRSVKC. 2 N-linked (GlcNAc...) asparagine glycosylation sites follow: Asn316 and Asn483. Residues 494–510 form a helical membrane-spanning segment; it reads VIGFLLSCVATTIVLSV.

Belongs to the UDP-glycosyltransferase family.

It localises to the endoplasmic reticulum membrane. The enzyme catalyses glucuronate acceptor + UDP-alpha-D-glucuronate = acceptor beta-D-glucuronoside + UDP + H(+). It catalyses the reaction 17alpha-estradiol + UDP-alpha-D-glucuronate = 17alpha-estradiol 3-O-(beta-D-glucuronate) + UDP + H(+). The catalysed reaction is 17alpha-estradiol + UDP-alpha-D-glucuronate = 17alpha-estradiol 17-O-(beta-D-glucuronate) + UDP + H(+). It carries out the reaction 17beta-estradiol + UDP-alpha-D-glucuronate = 17beta-estradiol 17-O-(beta-D-glucuronate) + UDP + H(+). The enzyme catalyses 17beta-hydroxy-5alpha-androstan-3-one + UDP-alpha-D-glucuronate = 5alpha-dihydrotestosterone 17-O-(beta-D-glucuronate) + UDP + H(+). It catalyses the reaction testosterone + UDP-alpha-D-glucuronate = testosterone 17-O-(beta-D-glucuronate) + UDP + H(+). Its function is as follows. UDP-glucuronosyltransferase (UGT) that catalyzes phase II biotransformation reactions in which lipophilic substrates are conjugated with glucuronic acid to increase the metabolite's water solubility, thereby facilitating excretion into either the urine or bile. Catalyzes the glucuronidation of endogenous steroid hormones such as androgens (epitestosterone, androsterone) and estrogens (estradiol, epiestradiol). This chain is UDP-glucuronosyltransferase 2B17, found in Mus musculus (Mouse).